The chain runs to 181 residues: MKHTLSVLVEDESGVLTRISGLFARRGFNIDSLAVGPAEKAGISRITMVIRGDNRIIEQITKHLYKLVNVLKIQDITNIPCVERELMLIKVKTGENKRNEILEIANIFRARVVDLSESFIILEITGDPGKIAAIEKLLEKYGICEIARTGKIALTRESKINTEILRLNTMINNDKIRGGGT.

One can recognise an ACT domain in the interval 4-78; it reads TLSVLVEDES…NVLKIQDITN (75 aa).

This sequence belongs to the acetolactate synthase small subunit family. In terms of assembly, dimer of large and small chains.

The protein resides in the plastid. Its subcellular location is the chloroplast. The enzyme catalyses 2 pyruvate + H(+) = (2S)-2-acetolactate + CO2. It participates in amino-acid biosynthesis; L-isoleucine biosynthesis; L-isoleucine from 2-oxobutanoate: step 1/4. It functions in the pathway amino-acid biosynthesis; L-valine biosynthesis; L-valine from pyruvate: step 1/4. In Galdieria sulphuraria (Red alga), this protein is Acetolactate synthase small subunit (ilvH).